The following is a 343-amino-acid chain: Holliday junction branch migration complex subunit RuvB (343 aa).

The tract at residues 1–181 (MDRIIDTAAT…FGIVQRLEFY (181 aa)) is large ATPase domain (RuvB-L). ATP-binding positions include Ile20, Arg21, Gly62, Lys65, Thr66, Thr67, 128 to 130 (EDF), Arg171, Tyr181, and Arg218. Thr66 is a Mg(2+) binding site. The interval 182–252 (SPEDLARIVR…VAQAAMQMLK (71 aa)) is small ATPAse domain (RuvB-S). Residues 255–343 (QGGFDELDRR…SAFTDPEDLF (89 aa)) are head domain (RuvB-H). DNA is bound by residues Arg291, Arg310, and Arg315.

The protein belongs to the RuvB family. In terms of assembly, homohexamer. Forms an RuvA(8)-RuvB(12)-Holliday junction (HJ) complex. HJ DNA is sandwiched between 2 RuvA tetramers; dsDNA enters through RuvA and exits via RuvB. An RuvB hexamer assembles on each DNA strand where it exits the tetramer. Each RuvB hexamer is contacted by two RuvA subunits (via domain III) on 2 adjacent RuvB subunits; this complex drives branch migration. In the full resolvosome a probable DNA-RuvA(4)-RuvB(12)-RuvC(2) complex forms which resolves the HJ.

It localises to the cytoplasm. The catalysed reaction is ATP + H2O = ADP + phosphate + H(+). Functionally, the RuvA-RuvB-RuvC complex processes Holliday junction (HJ) DNA during genetic recombination and DNA repair, while the RuvA-RuvB complex plays an important role in the rescue of blocked DNA replication forks via replication fork reversal (RFR). RuvA specifically binds to HJ cruciform DNA, conferring on it an open structure. The RuvB hexamer acts as an ATP-dependent pump, pulling dsDNA into and through the RuvAB complex. RuvB forms 2 homohexamers on either side of HJ DNA bound by 1 or 2 RuvA tetramers; 4 subunits per hexamer contact DNA at a time. Coordinated motions by a converter formed by DNA-disengaged RuvB subunits stimulates ATP hydrolysis and nucleotide exchange. Immobilization of the converter enables RuvB to convert the ATP-contained energy into a lever motion, pulling 2 nucleotides of DNA out of the RuvA tetramer per ATP hydrolyzed, thus driving DNA branch migration. The RuvB motors rotate together with the DNA substrate, which together with the progressing nucleotide cycle form the mechanistic basis for DNA recombination by continuous HJ branch migration. Branch migration allows RuvC to scan DNA until it finds its consensus sequence, where it cleaves and resolves cruciform DNA. This chain is Holliday junction branch migration complex subunit RuvB, found in Xylella fastidiosa (strain 9a5c).